The sequence spans 69 residues: Beta-defensin 1 (69 aa).

Positions 1–21 (MKTHYFLLVMICFLFSQMEPG) are cleaved as a signal peptide. Residues 22–32 (VGILTSLGRRT) constitute a propeptide that is removed on maturation. Disulfide bonds link C37–C66, C44–C59, and C49–C67.

The protein belongs to the beta-defensin family. Monomer. Homodimer. As to expression, detected in kidney.

The protein localises to the secreted. The protein resides in the membrane. Functionally, has bactericidal activity. May act as a ligand for C-C chemokine receptor CCR6. Positively regulates the sperm motility and bactericidal activity in a CCR6-dependent manner. Binds to CCR6 and triggers Ca2+ mobilization in the sperm which is important for its motility. The sequence is that of Beta-defensin 1 (Defb1) from Mus musculus (Mouse).